The following is a 183-amino-acid chain: Protein Syd (183 aa).

The protein belongs to the Syd family.

It localises to the cell inner membrane. In terms of biological role, interacts with the SecY protein in vivo. May bind preferentially to an uncomplexed state of SecY, thus functioning either as a chelating agent for excess SecY in the cell or as a regulatory factor that negatively controls the translocase function. In Yersinia enterocolitica serotype O:8 / biotype 1B (strain NCTC 13174 / 8081), this protein is Protein Syd.